The sequence spans 211 residues: Ribosomal RNA small subunit methyltransferase G (211 aa).

G73, F78, and R141 together coordinate S-adenosyl-L-methionine.

This sequence belongs to the methyltransferase superfamily. RNA methyltransferase RsmG family.

The protein resides in the cytoplasm. It catalyses the reaction guanosine(527) in 16S rRNA + S-adenosyl-L-methionine = N(7)-methylguanosine(527) in 16S rRNA + S-adenosyl-L-homocysteine. Its function is as follows. Specifically methylates the N7 position of guanine in position 527 of 16S rRNA. In Jannaschia sp. (strain CCS1), this protein is Ribosomal RNA small subunit methyltransferase G.